A 938-amino-acid chain; its full sequence is Isoleucine--tRNA ligase (938 aa).

Residues 58–68 carry the 'HIGH' region motif; sequence PYANGNIHIGH. L-isoleucyl-5'-AMP is bound at residue Glu-562. A 'KMSKS' region motif is present at residues 603 to 607; the sequence is KMSKS. Lys-606 provides a ligand contact to ATP. Zn(2+)-binding residues include Cys-901, Cys-904, Cys-921, and Cys-924.

The protein belongs to the class-I aminoacyl-tRNA synthetase family. IleS type 1 subfamily. Monomer. Requires Zn(2+) as cofactor.

It is found in the cytoplasm. The catalysed reaction is tRNA(Ile) + L-isoleucine + ATP = L-isoleucyl-tRNA(Ile) + AMP + diphosphate. Its function is as follows. Catalyzes the attachment of isoleucine to tRNA(Ile). As IleRS can inadvertently accommodate and process structurally similar amino acids such as valine, to avoid such errors it has two additional distinct tRNA(Ile)-dependent editing activities. One activity is designated as 'pretransfer' editing and involves the hydrolysis of activated Val-AMP. The other activity is designated 'posttransfer' editing and involves deacylation of mischarged Val-tRNA(Ile). The sequence is that of Isoleucine--tRNA ligase from Actinobacillus pleuropneumoniae serotype 5b (strain L20).